Consider the following 120-residue polypeptide: Spermidine export protein MdtJ (120 aa).

4 helical membrane-spanning segments follow: residues 1-21 (MFYWILLALAIIAEITGTLSM), 31-51 (TGFILMLAMIALSYIFLAFAV), 54-74 (IALGVAYALWEGIGILLITLF), and 81-101 (ESLSLLKIAGLTTLVIGIVLI).

It belongs to the drug/metabolite transporter (DMT) superfamily. Small multidrug resistance (SMR) (TC 2.A.7.1) family. MdtJ subfamily. In terms of assembly, forms a complex with MdtI.

Its subcellular location is the cell inner membrane. Functionally, catalyzes the excretion of spermidine. This is Spermidine export protein MdtJ from Klebsiella pneumoniae subsp. pneumoniae (strain ATCC 700721 / MGH 78578).